The chain runs to 106 residues: Small ribosomal subunit protein uS17 (106 aa).

This sequence belongs to the universal ribosomal protein uS17 family. Part of the 30S ribosomal subunit.

One of the primary rRNA binding proteins, it binds specifically to the 5'-end of 16S ribosomal RNA. This chain is Small ribosomal subunit protein uS17, found in Picrophilus torridus (strain ATCC 700027 / DSM 9790 / JCM 10055 / NBRC 100828 / KAW 2/3).